We begin with the raw amino-acid sequence, 95 residues long: Integration host factor subunit beta (95 aa).

A disordered region spans residues 52–95 (SLHHRPPRVGRNPKTGESVHLPSRRVPHFKPGKELRDRVNSIKD). Over residues 82–95 (PGKELRDRVNSIKD) the composition is skewed to basic and acidic residues.

It belongs to the bacterial histone-like protein family. In terms of assembly, heterodimer of an alpha and a beta chain.

In terms of biological role, this protein is one of the two subunits of integration host factor, a specific DNA-binding protein that functions in genetic recombination as well as in transcriptional and translational control. The protein is Integration host factor subunit beta of Methylococcus capsulatus (strain ATCC 33009 / NCIMB 11132 / Bath).